The sequence spans 363 residues: AA9 family lytic polysaccharide monooxygenase I (363 aa).

The signal sequence occupies residues 1 to 19 (MSLFKFAAFVLGTAGSVAG). Cu(2+) contacts are provided by histidine 20 and histidine 105. 2 cysteine pairs are disulfide-bonded: cysteine 75–cysteine 197 and cysteine 116–cysteine 120. Positions 183 and 192 each coordinate O2. Cu(2+) is bound at residue tyrosine 194. Residues 248–257 (GSDSNTATSG) are compositionally biased toward polar residues. Disordered stretches follow at residues 248–270 (GSDS…PTTT) and 298–363 (SVSY…RTQS). Over residues 258-270 (ASPPSTNFSPTTT) the composition is skewed to low complexity. Positions 298-307 (SVSYSQTPWP) are enriched in polar residues. Residues 308–329 (SSTATEATSASSSAGGSNNGHT) show a composition bias toward low complexity. A compositionally biased stretch (basic residues) spans 342 to 354 (TGKKRSRLNRRRM).

The protein belongs to the polysaccharide monooxygenase AA9 family. Cu(2+) serves as cofactor.

It is found in the secreted. It carries out the reaction [(1-&gt;4)-beta-D-glucosyl]n+m + reduced acceptor + O2 = 4-dehydro-beta-D-glucosyl-[(1-&gt;4)-beta-D-glucosyl]n-1 + [(1-&gt;4)-beta-D-glucosyl]m + acceptor + H2O.. Its function is as follows. Lytic polysaccharide monooxygenase (LPMO) that depolymerizes crystalline and amorphous polysaccharides via the oxidation of scissile alpha- or beta-(1-4)-glycosidic bonds, yielding C1 or C4 oxidation products. Catalysis by LPMOs requires the reduction of the active-site copper from Cu(II) to Cu(I) by a reducing agent and H(2)O(2) or O(2) as a cosubstrate. This chain is AA9 family lytic polysaccharide monooxygenase I, found in Emericella nidulans (strain FGSC A4 / ATCC 38163 / CBS 112.46 / NRRL 194 / M139) (Aspergillus nidulans).